Here is a 629-residue protein sequence, read N- to C-terminus: MTVQDKQRQILPLFEHLTSLTRGGLDRTESDVRLRRVGRLPRGTLFSCFHSEHLKEATELYQILYKADSFADFIHLAQQARDIVNEGLFVYSVSVAILHRDDCRGVTVPPIQEIFPDRFVPAETVNQAVKADLKRQSSDEDVLVEIQETGNILDPEHKLAYFREDIGANAHHWHWHIVYPPTWDASVMSKVKDRKGELFYYMHQQMCARYDCDRLSTGLRRMIPFHNFDEKLEGYSPHLTSLVSGLNYASRPAGLHLRDLVDFVDVQDMARWRERLLYSIDIGHVIDHEGQEIPLDAEHGIDVLGALLESSHDSLNDDYYGNLHNSGHVMMARIHDPDGRFRENPGVMSDTSTSLRDPIFYRYHRFIDNIFQEYKATLPCYEKKDLEFSGVEIVNCTVNAKAPNVINTYMKESTLEMSHGISFKGAVKVKYQHLDHDPFTYSISVENTTGDVKHATVRIFLGPTQDELGNRLRLNEQRRFYIELDKFHAELAAGKNTITRKSSESSVTVSHTPTFEELQRGEGVDENTTEFCSCGWPEHLLVPRGTYKGMDFQLFVMLTDYEDDHVGSHNGQTLCADAVSYCGAKDSKYPDKRAMGFPFDRVIKARTVADFRTTNMSFTDVKIQFKDQV.

Cu cation-binding residues include His-172, His-176, His-203, His-324, His-328, and His-364. Asn-395 and Asn-447 each carry an N-linked (GlcNAc...) asparagine glycan. Polar residues predominate over residues 503–513 (SESSVTVSHTP). The segment at 503–522 (SESSVTVSHTPTFEELQRGE) is disordered. An N-linked (GlcNAc...) asparagine glycan is attached at Asn-527. Cys-534 and Cys-582 are oxidised to a cystine. A glycan (N-linked (GlcNAc...) asparagine) is linked at Asn-615.

Belongs to the tyrosinase family. Hemocyanin subfamily. In terms of assembly, tarantula hemocyanin is a 24-chain polymer with seven different chains identified. As to expression, hemolymph.

It localises to the secreted. Its subcellular location is the extracellular space. In terms of biological role, hemocyanins are copper-containing oxygen carriers occurring freely dissolved in the hemolymph of many mollusks and arthropods. The sequence is that of Hemocyanin F chain (HCF) from Aphonopelma sp. (American tarantula).